A 467-amino-acid chain; its full sequence is Chromosomal replication initiator protein DnaA (467 aa).

Positions 1–84 are domain I, interacts with DnaA modulators; sequence MDISLDQLWD…LQVEFSVSPH (84 aa). The tract at residues 84–125 is domain II; sequence HASVEAEPPSRAISPTSGRAGSLPASTTLGLEVGGSLPMRAP. Residues 89–108 are disordered; that stretch reads AEPPSRAISPTSGRAGSLPA. A compositionally biased stretch (polar residues) spans 96 to 108; the sequence is ISPTSGRAGSLPA. The tract at residues 126–342 is domain III, AAA+ region; sequence DLNPKYSFSR…GALIRAVAYV (217 aa). Residues glycine 170, glycine 172, lysine 173, and threonine 174 each contribute to the ATP site. The segment at 343 to 467 is domain IV, binds dsDNA; it reads SISGLPMSVE…LRVVANSRSS (125 aa).

This sequence belongs to the DnaA family. Oligomerizes as a right-handed, spiral filament on DNA at oriC.

Its subcellular location is the cytoplasm. Functionally, plays an essential role in the initiation and regulation of chromosomal replication. ATP-DnaA binds to the origin of replication (oriC) to initiate formation of the DNA replication initiation complex once per cell cycle. Binds the DnaA box (a 9 base pair repeat at the origin) and separates the double-stranded (ds)DNA. Forms a right-handed helical filament on oriC DNA; dsDNA binds to the exterior of the filament while single-stranded (ss)DNA is stabiized in the filament's interior. The ATP-DnaA-oriC complex binds and stabilizes one strand of the AT-rich DNA unwinding element (DUE), permitting loading of DNA polymerase. After initiation quickly degrades to an ADP-DnaA complex that is not apt for DNA replication. Binds acidic phospholipids. The protein is Chromosomal replication initiator protein DnaA of Synechococcus sp. (strain JA-2-3B'a(2-13)) (Cyanobacteria bacterium Yellowstone B-Prime).